The chain runs to 411 residues: Dual-specificity RNA methyltransferase RlmN (411 aa).

Catalysis depends on E125, which acts as the Proton acceptor. The Radical SAM core domain occupies 131 to 380 (EEGRGTLCIS…IRTPRGRDIL (250 aa)). The cysteines at positions 138 and 383 are disulfide-linked. Positions 145, 149, and 152 each coordinate [4Fe-4S] cluster. S-adenosyl-L-methionine-binding positions include 209–210 (GE), S241, 263–265 (SLH), and N340. C383 functions as the S-methylcysteine intermediate in the catalytic mechanism.

Belongs to the radical SAM superfamily. RlmN family. Requires [4Fe-4S] cluster as cofactor.

Its subcellular location is the cytoplasm. The catalysed reaction is adenosine(2503) in 23S rRNA + 2 reduced [2Fe-2S]-[ferredoxin] + 2 S-adenosyl-L-methionine = 2-methyladenosine(2503) in 23S rRNA + 5'-deoxyadenosine + L-methionine + 2 oxidized [2Fe-2S]-[ferredoxin] + S-adenosyl-L-homocysteine. It carries out the reaction adenosine(37) in tRNA + 2 reduced [2Fe-2S]-[ferredoxin] + 2 S-adenosyl-L-methionine = 2-methyladenosine(37) in tRNA + 5'-deoxyadenosine + L-methionine + 2 oxidized [2Fe-2S]-[ferredoxin] + S-adenosyl-L-homocysteine. In terms of biological role, specifically methylates position 2 of adenine 2503 in 23S rRNA and position 2 of adenine 37 in tRNAs. m2A2503 modification seems to play a crucial role in the proofreading step occurring at the peptidyl transferase center and thus would serve to optimize ribosomal fidelity. The protein is Dual-specificity RNA methyltransferase RlmN of Brucella melitensis biotype 2 (strain ATCC 23457).